Consider the following 168-residue polypeptide: NADH-quinone oxidoreductase subunit B (168 aa).

[4Fe-4S] cluster is bound by residues Cys-49, Cys-50, Cys-114, and Cys-144.

The protein belongs to the complex I 20 kDa subunit family. NDH-1 is composed of 14 different subunits. Subunits NuoB, C, D, E, F, and G constitute the peripheral sector of the complex. [4Fe-4S] cluster is required as a cofactor.

Its subcellular location is the cell membrane. It carries out the reaction a quinone + NADH + 5 H(+)(in) = a quinol + NAD(+) + 4 H(+)(out). NDH-1 shuttles electrons from NADH, via FMN and iron-sulfur (Fe-S) centers, to quinones in the respiratory chain. Couples the redox reaction to proton translocation (for every two electrons transferred, four hydrogen ions are translocated across the cytoplasmic membrane), and thus conserves the redox energy in a proton gradient. This Wolbachia pipientis wMel protein is NADH-quinone oxidoreductase subunit B.